Here is a 664-residue protein sequence, read N- to C-terminus: MNFRRDISALNEDIIVEQLLRSHDPDGRWLDSEMLLQEVETILSFVLQNDVSRPLLTENCITTIEVFDSKETLPYAIFRISVQMLCPCTGENEIRKRTMVLFDLLKEYRWDAKAVLVLGVLAATYGGLLLPVHLAICDPVAASIAKLNQLPIERTKFRPWLESLNLLIKAMVDVTKCIIKFEKIPFKQAKLDNNILGETLSNIYLTTYRVVKSALTCMQQIPYFKQTQQAKKSRKTAAELSIESRRAAGELSSLGYQLLNIHTRLNKQVEDCSTQIEEEINQRLRNINIETHQDNQDVLHLLFSLQDDLPLQQYSRQISITEVQDKVTLLLLSKPPVEPLFFLLQQLYDHPSNTNTEQNYEIIWVPIPSSQKWTDEEKEIFDFYSNSLPWISVRQPWLMSSTILNFFKQEWHYKDNEAMLVVIDSNGRFVNMNAMDMVLIWGVKAYPFSVSREDELWKEHGWSINLLLDGIHPTFEGREICIFGSENLDWIDEFVSLARKIQNLGFQLELIYLSNQRRDERAMEESSILFSPTLQQLFWLRLESIERSKLKRIVIEPSKPDRVFEEVRNLLDFDYGKHRGWGIIGNGSTAETVDGEKMTERMRKIVRWGEYAKGLGFTEAIEIAAEKPCELSHTAVVPFEEALTMKVVTCEKCKWPMKRFVAYQ.

This is Protein SIEVE ELEMENT OCCLUSION C from Arabidopsis thaliana (Mouse-ear cress).